We begin with the raw amino-acid sequence, 161 residues long: Small ribosomal subunit protein uS9 (161 aa).

This sequence belongs to the universal ribosomal protein uS9 family.

This chain is Small ribosomal subunit protein uS9, found in Bartonella tribocorum (strain CIP 105476 / IBS 506).